We begin with the raw amino-acid sequence, 598 residues long: Urease subunit alpha (598 aa).

Residues 136–598 enclose the Urease domain; sequence GGLDTHVHWL…APLAQRYFLF (463 aa). Ni(2+) contacts are provided by H141, H143, and K223. K223 bears the N6-carboxylysine mark. Position 225 (H225) interacts with substrate. Positions 252 and 278 each coordinate Ni(2+). H326 acts as the Proton donor in catalysis. A Ni(2+)-binding site is contributed by D366.

It belongs to the metallo-dependent hydrolases superfamily. Urease alpha subunit family. Heterotrimer of UreA (gamma), UreB (beta) and UreC (alpha) subunits. Three heterotrimers associate to form the active enzyme. Requires Ni cation as cofactor. Post-translationally, carboxylation allows a single lysine to coordinate two nickel ions.

Its subcellular location is the cytoplasm. It carries out the reaction urea + 2 H2O + H(+) = hydrogencarbonate + 2 NH4(+). It participates in nitrogen metabolism; urea degradation; CO(2) and NH(3) from urea (urease route): step 1/1. This Ureaplasma urealyticum serovar 10 (strain ATCC 33699 / Western) protein is Urease subunit alpha.